The primary structure comprises 541 residues: Phosphoenolpyruvate carboxykinase (ATP) (541 aa).

Substrate-binding residues include R67, Y207, and K213. ATP is bound by residues K213, H232, and 248 to 256 (GLSGTGKTT). Mn(2+) is bound by residues K213 and H232. D269 contacts Mn(2+). Residues E297, R333, 449–450 (RI), and T455 each bind ATP. R333 is a binding site for substrate.

The protein belongs to the phosphoenolpyruvate carboxykinase (ATP) family. As to quaternary structure, monomer. Requires Mn(2+) as cofactor.

It localises to the cytoplasm. The enzyme catalyses oxaloacetate + ATP = phosphoenolpyruvate + ADP + CO2. The protein operates within carbohydrate biosynthesis; gluconeogenesis. Functionally, involved in the gluconeogenesis. Catalyzes the conversion of oxaloacetate (OAA) to phosphoenolpyruvate (PEP) through direct phosphoryl transfer between the nucleoside triphosphate and OAA. In Aliivibrio salmonicida (strain LFI1238) (Vibrio salmonicida (strain LFI1238)), this protein is Phosphoenolpyruvate carboxykinase (ATP).